We begin with the raw amino-acid sequence, 232 residues long: Histone H1.X (232 aa).

One can recognise an H15 domain in the interval 36–112; that stretch reads HHPSYMDMIK…GATGSFRMGK (77 aa). The segment at 142-232 is disordered; sequence ISKAEKTKPS…LRTGTRKSYC (91 aa). Over residues 159 to 197 the composition is skewed to basic residues; that stretch reads KKGKPISTMKKRGVMSKKRSSKNKMAPKAKSHGLKKKGP.

It belongs to the histone H1/H5 family.

It localises to the nucleus. It is found in the chromosome. In Caenorhabditis elegans, this protein is Histone H1.X (hil-1).